A 28-amino-acid polypeptide reads, in one-letter code: Dolichyl-diphosphooligosaccharide--protein glycosyltransferase subunit 1 (28 aa).

The protein belongs to the OST1 family. As to quaternary structure, component of the oligosaccharyltransferase (OST) complex.

The protein resides in the endoplasmic reticulum membrane. It functions in the pathway protein modification; protein glycosylation. Subunit of the oligosaccharyl transferase (OST) complex that catalyzes the initial transfer of a defined glycan (Glc(3)Man(9)GlcNAc(2) in eukaryotes) from the lipid carrier dolichol-pyrophosphate to an asparagine residue within an Asn-X-Ser/Thr consensus motif in nascent polypeptide chains, the first step in protein N-glycosylation. N-glycosylation occurs cotranslationally and the complex associates with the Sec61 complex at the channel-forming translocon complex that mediates protein translocation across the endoplasmic reticulum (ER). All subunits are required for a maximal enzyme activity. This is Dolichyl-diphosphooligosaccharide--protein glycosyltransferase subunit 1 from Gallus gallus (Chicken).